A 158-amino-acid polypeptide reads, in one-letter code: uncharacterized protein (158 aa).

A helical transmembrane segment spans residues 33-53 (VLAAVPQLGAAKVLVLLLLGV).

The protein resides in the membrane. This is an uncharacterized protein from Saccharomyces cerevisiae (strain ATCC 204508 / S288c) (Baker's yeast).